Reading from the N-terminus, the 1252-residue chain is DNA-directed RNA polymerase subunit beta (1252 aa).

It belongs to the RNA polymerase beta chain family. The RNAP catalytic core consists of 2 alpha, 1 beta, 1 beta' and 1 omega subunit. When a sigma factor is associated with the core the holoenzyme is formed, which can initiate transcription.

The enzyme catalyses RNA(n) + a ribonucleoside 5'-triphosphate = RNA(n+1) + diphosphate. Its function is as follows. DNA-dependent RNA polymerase catalyzes the transcription of DNA into RNA using the four ribonucleoside triphosphates as substrates. The sequence is that of DNA-directed RNA polymerase subunit beta from Chlamydia caviae (strain ATCC VR-813 / DSM 19441 / 03DC25 / GPIC) (Chlamydophila caviae).